The primary structure comprises 974 residues: Pentatricopeptide repeat-containing protein At5g61990, mitochondrial (974 aa).

The transit peptide at 1–31 directs the protein to the mitochondrion; sequence MMGSMLFRKRTLVTRANFLLFRSFSVNVEKL. 24 PPR repeats span residues 96 to 130, 150 to 184, 185 to 219, 220 to 250, 257 to 275, 276 to 310, 311 to 345, 346 to 380, 381 to 415, 416 to 450, 451 to 485, 486 to 520, 521 to 555, 556 to 590, 591 to 625, 626 to 660, 661 to 695, 696 to 730, 731 to 761, 765 to 799, 804 to 838, 839 to 873, 874 to 908, and 914 to 948; these read KLDSFSFLALDLCNFGSFEKALSVVERMIERNWPV, DGVLFGILFDGYIAKGYIEEAVFVFSSSMGLELVP, RLSRCKVLLDALLRWNRLDLFWDVYKGMVERNVVF, DVKTYHMLIIAHCRAGNVQLGKDVLFKTEKE, NVDGALKLKESMICKGLVP, LKYTYDVLIDGLCKIKRLEDAKSLLVEMDSLGVSL, DNHTYSLLIDGLLKGRNADAAKGLVHEMVSHGINI, KPYMYDCCICVMSKEGVMEKAKALFDGMIASGLIP, QAQAYASLIEGYCREKNVRQGYELLVEMKKRNIVI, SPYTYGTVVKGMCSSGDLDGAYNIVKEMIASGCRP, NVVIYTTLIKTFLQNSRFGDAMRVLKEMKEQGIAP, DIFCYNSLIIGLSKAKRMDEARSFLVEMVENGLKP, NAFTYGAFISGYIEASEFASADKYVKEMRECGVLP, NKVLCTGLINEYCKKGKVIEACSAYRSMVDQGILG, DAKTYTVLMNGLFKNDKVDDAEEIFREMRGKGIAP, DVFSYGVLINGFSKLGNMQKASSIFDEMVEEGLTP, NVIIYNMLLGGFCRSGEIEKAKELLDEMSVKGLHP, NAVTYCTIIDGYCKSGDLAEAFRLFDEMKLKGLVP, DSFVYTTLVDGCCRLNDVERAITIFGTNKKG, STAPFNALINWVFKFGKTELKTEVLNRLMDGSFDR, NDVTYNIMIDYLCKEGNLEAAKELFHQMQNANLMP, TVITYTSLLNGYDKMGRRAEMFPVFDEAIAAGIEP, DHIMYSVIINAFLKEGMTTKALVLVDQMFAKNAVD, and SISTCRALLSGFAKVGEMEVAEKVMENMVRLQYIP.

The protein belongs to the PPR family. P subfamily.

The protein resides in the mitochondrion. The polypeptide is Pentatricopeptide repeat-containing protein At5g61990, mitochondrial (Arabidopsis thaliana (Mouse-ear cress)).